A 775-amino-acid polypeptide reads, in one-letter code: MASLIYRQLLTNSYSVDLHDEIEQIGSEKTQSVTVNPGPFAQTRYAPVNWGHGEINDSTTVEPVLDGPYQPTTFKPPNDYWFLISSNTDGVVYESTNNNDFWTAVIAVEPHVSQTNRQYILFGENKQFNVENNSDKWKFFEMFKGSSQGDFSNRRTLTSNNRLVGMLKYGGRVWTFHGETPRATTDSSNTADLNNISIMIHSEFYIIPRSQESKCNEYIKNGLPPIQNTRNVVPLSLSSRSIQYRRAQVNEDITISKTSLWKEMQYNRDIIIRFKFGNSVIKLGGLGYKWSEISYKAANYQYSYSRDGEQVTAHTTCSVNGVNNFSYNGGSLPTDFSISRYEVSKENSYVYIDYWDDSKAFRNMVYVRSLAANLNSVKCTGGSYDFRLPVGGWPIMNGGAVSLHFAGVTLSTQFTDFVSLNSLRFRFSLTVDEPSFSIIRTRTINLYGLPAANPNNGNEYYEMSGRFSLISLVLTNDDYQTPIMNSVTVRQDLERQLNDLREEFNSLSQEIAMSQLIDLALLPLDMFSMFSGIKSTIDLTKSMATSVMKKFRKSKLATSISEMTNSLSDAASSASRSASIRSNLSTISNWTNTSKSVSNVTDSVNDVSTQTSTISKKLRLREMITQTEGMSFDDISAAVLKTKIDMSTQIGKNTLPDIVTEASEKFIPKRSYRVLKDNEVMEINTEGKFFAYKVDTLNEIPFDINKFAELVTDSPVISAIIDFKTLKNLNDNYGITRIEAFNLIKSNPNVLRNFINQNNPIIRNRIEQLILQCKL.

Residues 65–223 (LDGPYQPTTF…KCNEYIKNGL (159 aa)) are spike head. Residues 247-478 (AQVNEDITIS…LISLVLTNDD (232 aa)) are spike body and stalk (antigen domain). The DGE motif; interaction with ITGA2/ITGB1 heterodimer motif lies at 307 to 309 (DGE). C317 and C379 are joined by a disulfide. A hydrophobic; possible role in virus entry into host cell region spans residues 388–408 (LPVGGWPIMNGGAVSLHFAGV). Positions 447–449 (YGL) match the YGL motif; interaction with ITGA4 motif. Residues 483 to 510 (IMNSVTVRQDLERQLNDLREEFNSLSQE) are a coiled coil. The spike foot stretch occupies residues 509–775 (QEIAMSQLID…IEQLILQCKL (267 aa)). Positions 643–645 (KID) match the KID motif; interaction with HSPA8 motif.

Belongs to the rotavirus VP4 family. Homotrimer. VP4 adopts a dimeric appearance above the capsid surface, while forming a trimeric base anchored inside the capsid layer. Only hints of the third molecule are observed above the capsid surface. It probably performs a series of molecular rearrangements during viral entry. Prior to trypsin cleavage, it is flexible. The priming trypsin cleavage triggers its rearrangement into rigid spikes with approximate two-fold symmetry of their protruding parts. After an unknown second triggering event, cleaved VP4 may undergo another rearrangement, in which two VP5* subunits fold back on themselves and join a third subunit to form a tightly associated trimer, shaped like a folded umbrella. Interacts with VP6. Interacts with VP7. As to quaternary structure, homotrimer. The trimer is coiled-coil stabilized by its C-terminus, however, its N-terminus, known as antigen domain or 'body', seems to be flexible allowing it to self-associate either as a dimer or a trimer. Post-translationally, proteolytic cleavage by trypsin results in activation of VP4 functions and greatly increases infectivity. The penetration into the host cell is dependent on trypsin treatment of VP4. It produces two peptides, VP5* and VP8* that remain associated with the virion. Cleavage of VP4 by trypsin probably occurs in vivo in the lumen of the intestine prior to infection of enterocytes. Trypsin seems to be incorporated into the three-layered viral particles but remains inactive as long as the viral outer capsid is intact and would only be activated upon the solubilization of the latter.

The protein resides in the virion. Its subcellular location is the host rough endoplasmic reticulum. It is found in the host cell membrane. The protein localises to the host cytoplasm. It localises to the host cytoskeleton. The protein resides in the host endoplasmic reticulum-Golgi intermediate compartment. Functionally, spike-forming protein that mediates virion attachment to the host epithelial cell receptors and plays a major role in cell penetration, determination of host range restriction and virulence. Rotavirus attachment and entry into the host cell probably involves multiple sequential contacts between the outer capsid proteins VP4 and VP7, and the cell receptors. It is subsequently lost, together with VP7, following virus entry into the host cell. Following entry into the host cell, low intracellular or intravesicular Ca(2+) concentration probably causes the calcium-stabilized VP7 trimers to dissociate from the virion. This step is probably necessary for the membrane-disrupting entry step and the release of VP4, which is locked onto the virion by VP7. During the virus exit from the host cell, VP4 seems to be required to target the newly formed virions to the host cell lipid rafts. In terms of biological role, forms the spike 'foot' and 'body' and acts as a membrane permeabilization protein that mediates release of viral particles from endosomal compartments into the cytoplasm. During entry, the part of VP5* that protrudes from the virus folds back on itself and reorganizes from a local dimer to a trimer. This reorganization may be linked to membrane penetration by exposing VP5* hydrophobic region. In integrin-dependent strains, VP5* targets the integrin heterodimer ITGA2/ITGB1 for cell attachment. Forms the head of the spikes and mediates the recognition of specific host cell surface glycans. It is the viral hemagglutinin and an important target of neutralizing antibodies. In sialic acid-dependent strains, VP8* binds to host cell sialic acid, most probably a ganglioside, providing the initial contact. In some other strains, VP8* mediates the attachment to histo-blood group antigens (HBGAs) for viral entry. This is Outer capsid protein VP4 from Rotavirus A (strain RVA/Human/Australia/RV-5/1981/G2P1B[4]) (RV-A).